The chain runs to 291 residues: ATP synthase gamma chain (291 aa).

This sequence belongs to the ATPase gamma chain family. As to quaternary structure, F-type ATPases have 2 components, CF(1) - the catalytic core - and CF(0) - the membrane proton channel. CF(1) has five subunits: alpha(3), beta(3), gamma(1), delta(1), epsilon(1). CF(0) has three main subunits: a, b and c.

It is found in the cell inner membrane. Its function is as follows. Produces ATP from ADP in the presence of a proton gradient across the membrane. The gamma chain is believed to be important in regulating ATPase activity and the flow of protons through the CF(0) complex. This Roseobacter denitrificans (strain ATCC 33942 / OCh 114) (Erythrobacter sp. (strain OCh 114)) protein is ATP synthase gamma chain.